Consider the following 184-residue polypeptide: Ribosome maturation factor RimM (184 aa).

In terms of domain architecture, PRC barrel spans 104–184; sequence SEDEFYWREL…RIEVDWDPGF (81 aa).

This sequence belongs to the RimM family. In terms of assembly, binds ribosomal protein uS19.

Its subcellular location is the cytoplasm. Functionally, an accessory protein needed during the final step in the assembly of 30S ribosomal subunit, possibly for assembly of the head region. Essential for efficient processing of 16S rRNA. May be needed both before and after RbfA during the maturation of 16S rRNA. It has affinity for free ribosomal 30S subunits but not for 70S ribosomes. This chain is Ribosome maturation factor RimM, found in Vibrio atlanticus (strain LGP32) (Vibrio splendidus (strain Mel32)).